Consider the following 495-residue polypeptide: Taxoid 2-alpha-hydroxylase (495 aa).

Residues 17 to 37 (LQSSAILLTVVSGIIVIVILL) form a helical membrane-spanning segment. A heme-binding site is contributed by Cys441.

Belongs to the cytochrome P450 family.

It is found in the microsome membrane. It catalyses the reaction taxusin + reduced [NADPH--hemoprotein reductase] + O2 = 2alpha-hydroxytaxusin + oxidized [NADPH--hemoprotein reductase] + H2O + H(+). The enzyme catalyses 7beta-hydroxytaxusin + reduced [NADPH--hemoprotein reductase] + O2 = 2alpha,7beta-dihydroxytaxusin + oxidized [NADPH--hemoprotein reductase] + H2O + H(+). It functions in the pathway alkaloid biosynthesis; taxol biosynthesis. Catalyzes the conversion of taxusin to 2-alpha-hydroxytaxusin in taxol biosynthesis. Catalyzes the conversion of 7-beta-hydroxytaxusin to 2-alpha-7-beta-hydroxytaxusin in taxol biosynthesis. The sequence is that of Taxoid 2-alpha-hydroxylase from Taxus canadensis (Canadian yew).